The sequence spans 368 residues: Aminomethyltransferase (368 aa).

It belongs to the GcvT family. As to quaternary structure, the glycine cleavage system is composed of four proteins: P, T, L and H.

The catalysed reaction is N(6)-[(R)-S(8)-aminomethyldihydrolipoyl]-L-lysyl-[protein] + (6S)-5,6,7,8-tetrahydrofolate = N(6)-[(R)-dihydrolipoyl]-L-lysyl-[protein] + (6R)-5,10-methylene-5,6,7,8-tetrahydrofolate + NH4(+). Its function is as follows. The glycine cleavage system catalyzes the degradation of glycine. This is Aminomethyltransferase from Xylella fastidiosa (strain 9a5c).